Reading from the N-terminus, the 434-residue chain is F-box/LRR-repeat protein 21 (434 aa).

Residues 39–85 (LLDWGTLPHHVILQIFQYLPLIDRARASSVCRRWNEVFHIPDLWRKF) enclose the F-box domain. 6 LRR repeats span residues 187–213 (DTPV…KMSS), 214–239 (CPHV…ALNY), 242–265 (LSDE…RIDV), 322–347 (GRSV…VVCA), 349–374 (GLLP…GLSE), and 375–400 (CEVS…SIME).

In terms of assembly, part of the SCF (SKP1-CUL1-F-box) E3 ubiquitin-protein ligase complex SCF(FBXL21) composed of CUL1, SKP1, RBX1 and FBXL21. Interacts with CRY1 and CRY2. As to expression, expressed in the hypothalamus, especially in the suprachiasmatic nucleus (SCN). Expression is driven by the core-clock. There is a pronounced diurnal and circadian expression rhythms rising rapidly at the start of the day and declining at the onset of the night.

It is found in the cytoplasm. It localises to the cytosol. The protein resides in the nucleus. It functions in the pathway protein modification; protein ubiquitination. In terms of biological role, substrate-recognition component of the SCF(FBXL21) E3 ubiquitin ligase complex involved in circadian rhythm function. Plays a key role in the maintenance of both the speed and the robustness of the circadian clock oscillation. The SCF(FBXL21) complex mainly acts in the cytosol and mediates ubiquitination of CRY proteins (CRY1 and CRY2), leading to CRY proteins stabilization. The SCF(FBXL21) complex counteracts the activity of the SCF(FBXL3) complex and protects CRY proteins from degradation. Involved in the hypothalamic suprachiasmatic nucleus (SCN) clock regulating temporal organization of the daily activities. This chain is F-box/LRR-repeat protein 21 (Fbxl21), found in Mus musculus (Mouse).